Here is a 131-residue protein sequence, read N- to C-terminus: Protein ApaG (131 aa).

The ApaG domain occupies 3–127; sequence RAVTRQIEVT…FSLDSPDGGK (125 aa).

This Bradyrhizobium sp. (strain BTAi1 / ATCC BAA-1182) protein is Protein ApaG.